Consider the following 508-residue polypeptide: Cyclin-A1-1 (508 aa).

A compositionally biased stretch (low complexity) spans 1–28 (MSSNLAASRRSSSSSSVAAAAAAKRPAV). 2 disordered regions span residues 1–40 (MSSN…GKAA) and 82–125 (VKKG…ESVL). Residues 29–39 (GEGGGGGGGKA) show a composition bias toward gly residues. Residues 98-111 (ASAVKSASAKPAPA) are compositionally biased toward low complexity.

It belongs to the cyclin family. Cyclin AB subfamily. As to expression, expressed in the dividing region of the root cap and root apex. Expressed in the intercalary meristem of internodes and in adventitious roots under submergence conditions.

Functionally, involved in the control of the cell cycle at the G2/M (mitosis) transition. The sequence is that of Cyclin-A1-1 (CYCA1-1) from Oryza sativa subsp. japonica (Rice).